We begin with the raw amino-acid sequence, 634 residues long: MTNSNLRTENHFDYVKITLASPDRVMEWGQRTLPNGQVVGEVTKPETINYRTLKPEMDGLFCEKIFGPSKDWECHCGKYKRVRHRGIVCERCGVEVTESRVRRHRMGFIKLAAPVSHVWYLKGIPSYVAILLDMPLRDVEQIVYFNCYVVLDPGDHKELKYKQLLTEDEWLEIEDEIYAEDSTIENEPMVGIGAEALKQLLEDLDLPDVAEQLREEISSSKGQKRAKLIKRLRVIDNFIATNARPEWMVLDAIPVIPPDLRPMVQLDGGRFATSDLNDLYRRVINRNNRLARLQEILAPEIIVRNEKRMLQEAVDALIDNGRRGRTVVGANNRPLKSLSDIIEGKQGRFRQNLLGKRVDYSGRSVIVVGPKLKMHQCGLPKEMAIELFQPFVIHRLIRQNIVNNIKAAKKLIQRADDEVMQVLQEVIEGHPILLNRAPTLHRLGIQAFEPKLVDGRAIQLHPLVCPAFNADFDGDQMAVHVPLAIESQTEARMLMLASNNILSPATGDPIITPSQDMVLGSYYLTALKPGASVPEFGDQSRTYSGLEDVIHAFEDKRILLHDWVWVRFNGEVEDEDEIEEPIKAELLSDGTRIEQWTYRRDRFDEDGALISRYILTTVGRVVMNYTIIDAVAVA.

Positions 74, 76, 89, and 92 each coordinate Zn(2+). Mg(2+) contacts are provided by Asp-471, Asp-473, and Asp-475.

It belongs to the RNA polymerase beta' chain family. RpoC1 subfamily. As to quaternary structure, in cyanobacteria the RNAP catalytic core is composed of 2 alpha, 1 beta, 1 beta', 1 gamma and 1 omega subunit. When a sigma factor is associated with the core the holoenzyme is formed, which can initiate transcription. It depends on Mg(2+) as a cofactor. Zn(2+) serves as cofactor.

The catalysed reaction is RNA(n) + a ribonucleoside 5'-triphosphate = RNA(n+1) + diphosphate. DNA-dependent RNA polymerase catalyzes the transcription of DNA into RNA using the four ribonucleoside triphosphates as substrates. In Prochlorococcus marinus (strain MIT 9313), this protein is DNA-directed RNA polymerase subunit gamma.